A 138-amino-acid polypeptide reads, in one-letter code: Thioredoxin H2-1 (138 aa).

Positions 1–20 (MGGAFSTSKPKPAAGEEGGE) are disordered. Residues 12 to 129 (PAAGEEGGES…LEKTINTLRS (118 aa)) form the Thioredoxin domain. Residues C55 and C58 each act as nucleophile in the active site. C55 and C58 are oxidised to a cystine.

The protein belongs to the thioredoxin family. Plant H-type subfamily.

The protein localises to the cytoplasm. Probable thiol-disulfide oxidoreductase that may be involved in the redox regulation of a number of cytosolic enzymes. The sequence is that of Thioredoxin H2-1 from Oryza sativa subsp. japonica (Rice).